Here is an 80-residue protein sequence, read N- to C-terminus: Caltrin (80 aa).

A signal peptide spans 1-32 (MMAGRRSWPAMATVLLALLVCLGELVDSKPQP).

Its function is as follows. Inhibits calcium transport into spermatozoa; it does not bind directly to calcium. Binds to calmodulin. Inhibits the growth of microorganisms. Seem to act as an antibiotic by permeabilizing the bacterial membrane. The polypeptide is Caltrin (PYY2) (Bos taurus (Bovine)).